Here is a 76-residue protein sequence, read N- to C-terminus: Conotoxin Am6.3 (76 aa).

The signal sequence occupies residues 1–22 (MKLTCMMIIAVLFLTAWTFATA). Intrachain disulfides connect cysteine 52/cysteine 67, cysteine 59/cysteine 71, and cysteine 66/cysteine 75.

This sequence belongs to the conotoxin O1 superfamily. Post-translationally, is not hydroxylated. As to expression, expressed by the venom duct.

It is found in the secreted. Functionally, probable toxin that inhibits ion channels. This chain is Conotoxin Am6.3, found in Conus amadis (Amadis cone).